Reading from the N-terminus, the 168-residue chain is Putative ankyrin repeat protein RBE_1411 (168 aa).

ANK repeat units lie at residues 59–88 (TIFS…LQHK), 98–127 (YGDT…DLTI), and 131–160 (KGET…ILGN).

This is Putative ankyrin repeat protein RBE_1411 from Rickettsia bellii (strain RML369-C).